Here is an 89-residue protein sequence, read N- to C-terminus: UPF0147 protein Msed_2034 (89 aa).

Belongs to the UPF0147 family.

The protein is UPF0147 protein Msed_2034 of Metallosphaera sedula (strain ATCC 51363 / DSM 5348 / JCM 9185 / NBRC 15509 / TH2).